The sequence spans 468 residues: Fibrinogen beta chain (468 aa).

Residue Gln1 is modified to Pyrrolidone carboxylic acid. The span at 1–10 (QFPTDYDEGQ) shows a compositional bias: acidic residues. The segment at 1–54 (QFPTDYDEGQDDRPKVGLGARGHRPYDKKKEEAPSLRPVPPPISGGGYRARPAT) is disordered. An O-linked (GalNAc...) threonine glycan is attached at Thr4. Sulfotyrosine is present on Tyr6. Positions 24–34 (RPYDKKKEEAP) are enriched in basic and acidic residues. Positions 88-204 (KLQDTLVRQE…TQMEYCRTPC (117 aa)) form a coiled coil. Disulfide bonds link Cys208/Cys293 and Cys218/Cys247. Positions 209-465 (NIPVVSGKEC…KMSMKIRPYF (257 aa)) constitute a Fibrinogen C-terminal domain. The N-linked (GlcNAc...) asparagine glycan is linked to Asn371. Cysteines 401 and 414 form a disulfide.

In terms of assembly, heterohexamer; disulfide linked. Contains 2 sets of 3 non-identical chains (alpha, beta and gamma). The 2 heterotrimers are in head to head conformation with the N-termini in a small central domain. Post-translationally, conversion of fibrinogen to fibrin is triggered by thrombin, which cleaves fibrinopeptides A and B from alpha and beta chains, and thus exposes the N-terminal polymerization sites responsible for the formation of the soft clot. The soft clot is converted into the hard clot by factor XIIIA which catalyzes the epsilon-(gamma-glutamyl)lysine cross-linking between gamma chains (stronger) and between alpha chains (weaker) of different monomers. As to expression, detected in blood plasma (at protein level).

Its subcellular location is the secreted. In terms of biological role, cleaved by the protease thrombin to yield monomers which, together with fibrinogen alpha (FGA) and fibrinogen gamma (FGG), polymerize to form an insoluble fibrin matrix. Fibrin has a major function in hemostasis as one of the primary components of blood clots. In addition, functions during the early stages of wound repair to stabilize the lesion and guide cell migration during re-epithelialization. Was originally thought to be essential for platelet aggregation, based on in vitro studies using anticoagulated blood. However subsequent studies have shown that it is not absolutely required for thrombus formation in vivo. Enhances expression of SELP in activated platelets. Maternal fibrinogen is essential for successful pregnancy. Fibrin deposition is also associated with infection, where it protects against IFNG-mediated hemorrhage. May also facilitate the antibacterial immune response via both innate and T-cell mediated pathways. This Bos taurus (Bovine) protein is Fibrinogen beta chain (FGB).